The primary structure comprises 518 residues: Membrane-bound glycerophospholipid O-acyltransferase 2 (518 aa).

Helical transmembrane passes span 21 to 41 (PVDQ…AIWF), 60 to 80 (TLLG…HFVI), 87 to 107 (YLMI…FALG), 183 to 203 (FMGI…FIEG), 230 to 250 (IAVA…MTIT), and 267 to 283 (ASWP…LMAA). Active-site residues include N341 and H372. 3 helical membrane passes run 365–385 (FILS…FLTG), 415–435 (IITW…FVLL), and 443–463 (FYSS…LVFP).

It belongs to the membrane-bound acyltransferase family.

It is found in the endoplasmic reticulum membrane. The enzyme catalyses a 1-acyl-sn-glycero-3-phosphocholine + an acyl-CoA = a 1,2-diacyl-sn-glycero-3-phosphocholine + CoA. The catalysed reaction is a 1-acyl-sn-glycero-3-phosphoethanolamine + an acyl-CoA = a 1,2-diacyl-sn-glycero-3-phosphoethanolamine + CoA. It catalyses the reaction a 1-acyl-sn-glycero-3-phosphate + an acyl-CoA = a 1,2-diacyl-sn-glycero-3-phosphate + CoA. It carries out the reaction (9Z)-hexadecenoyl-CoA + 1-hexadecanoyl-sn-glycero-3-phosphocholine = 1-hexadecanoyl-2-(9Z-hexadecenoyl)-sn-glycero-3-phosphocholine + CoA. The enzyme catalyses 1-hexadecanoyl-sn-glycero-3-phosphoethanolamine + (9Z)-octadecenoyl-CoA = 1-hexadecanoyl-2-(9Z-octadecenoyl)-sn-glycero-3-phosphoethanolamine + CoA. The catalysed reaction is 1-hexadecanoyl-sn-glycero-3-phosphoethanolamine + (9Z)-hexadecenoyl-CoA = 1-hexadecanoyl-2-(9Z)-hexadecenoyl-sn-glycero-3-phosphoethanolamine + CoA. It catalyses the reaction 1-(9Z-octadecenoyl)-sn-glycero-3-phospho-L-serine + hexadecanoyl-CoA = 1-(9Z)-octadecenoyl-2-hexadecanoyl-sn-glycero-3-phosphoserine + CoA. It carries out the reaction (9Z,12Z)-octadecadienoyl-CoA + 1-hexadecanoyl-sn-glycero-3-phosphocholine = 1-hexadecanoyl-2-(9Z,12Z-octadecadienoyl)-sn-glycero-3-phosphocholine + CoA. The enzyme catalyses 1-hexadecanoyl-sn-glycero-3-phosphocholine + (9Z)-octadecenoyl-CoA = 1-hexadecanoyl-2-(9Z-octadecenoyl)-sn-glycero-3-phosphocholine + CoA. The catalysed reaction is 1-hexadecanoyl-sn-glycero-3-phosphate + (9Z)-hexadecenoyl-CoA = 1-hexadecanoyl-2-[(9Z)-hexadec-9-enoyl]-sn-glycero-3-phosphate + CoA. It catalyses the reaction 1-hexadecanoyl-sn-glycero-3-phosphate + (9Z)-octadecenoyl-CoA = 1-hexadecanoyl-2-(9Z-octadecenoyl)-sn-glycero-3-phosphate + CoA. It carries out the reaction a 1-O-(1Z-alkenyl)-sn-glycero-3-phosphocholine + (9Z)-octadecenoyl-CoA = 1-O-(1Z)-alkenyl-2-(9Z)-octadecenoyl-sn-glycero-3-phosphocholine + CoA. The enzyme catalyses a 1-O-(1Z-alkenyl)-sn-glycero-3-phosphoethanolamine + (9Z)-octadecenoyl-CoA = 1-O-(1Z)-alkenyl-2-(9Z)-octadecenoyl-sn-glycero-3-phosphoethanolamine + CoA. The catalysed reaction is 1-octadecanoyl-sn-glycero-3-phosphoethanolamine + (9Z)-octadecenoyl-CoA = 1-octadecanoyl-2-(9Z-octadecenoyl)-sn-glycero-3-phosphoethanolamine + CoA. It catalyses the reaction 1-octadecanoyl-sn-glycero-3-phosphocholine + (9Z)-octadecenoyl-CoA = 1-octadecanoyl-2-(9Z-octadecenoyl)-sn-glycero-3-phosphocholine + CoA. It carries out the reaction 1-(9Z-octadecenoyl)-sn-glycero-3-phosphoethanolamine + (9Z)-octadecenoyl-CoA = 1,2-di-(9Z-octadecenoyl)-sn-glycero-3-phosphoethanolamine + CoA. Its pathway is lipid metabolism; phospholipid metabolism. In terms of biological role, acyltransferase which catalyzes the transfer of an acyl group from an acyl-CoA to a lysophospholipid leading to the production of a phospholipid and participates in the reacylation step of the phospholipid remodeling pathway also known as the Lands cycle. May catalyze preferentially the acylation of lysophosphatidylethanolamine (1-acyl-sn-glycero-3-phosphoethanolamine or LPE) and lysophosphatidic acid (LPA) and to a lesser extend lysophosphatidylcholine (LPC) and lysophosphatidylserine (LPS). Prefers oleoyl-CoA as the acyl donor. The chain is Membrane-bound glycerophospholipid O-acyltransferase 2 from Gallus gallus (Chicken).